The primary structure comprises 955 residues: MAM domain-containing glycosylphosphatidylinositol anchor protein 1 (955 aa).

The signal sequence occupies residues 1–18; the sequence is MEVTCLLLLALIPFHCRG. 2 Ig-like domains span residues 24–123 and 132–230; these read PAQA…KSIR and PMLT…KAIT. N-linked (GlcNAc...) asparagine glycans are attached at residues Asn-42 and Asn-90. Intrachain disulfides connect Cys-60/Cys-108 and Cys-157/Cys-214. N-linked (GlcNAc...) asparagine glycosylation is found at Asn-235, Asn-247, Asn-257, Asn-307, and Asn-331. An Ig-like 3 domain is found at 240–323; the sequence is PALKLSVNET…VGNPAKKTVN (84 aa). Cys-262 and Cys-308 are joined by a disulfide. Ig-like domains are found at residues 338-432, 440-532, and 539-631; these read PDVI…VEVN, PTIS…AQVQ, and PEVE…FQVS. Cys-357 and Cys-415 are oxidised to a cystine. Asn-432 carries an N-linked (GlcNAc...) asparagine glycan. Disulfide bonds link Cys-463–Cys-514 and Cys-560–Cys-615. The Fibronectin type-III domain occupies 643–743; it reads TPNPTRSHKL…SRIIHYTEPI (101 aa). 2 N-linked (GlcNAc...) asparagine glycosylation sites follow: Asn-655 and Asn-747. An MAM domain is found at 751–918; the sequence is NTCHFEDEKI…VTLKKGECPR (168 aa). Over residues 779 to 788 the composition is skewed to polar residues; it reads LTQNPKRSPN. The interval 779–798 is disordered; that stretch reads LTQNPKRSPNTGPPTDISGT. The N-linked (GlcNAc...) asparagine glycan is linked to Asn-826. Ser-932 carries GPI-anchor amidated serine lipidation. Positions 933-955 are cleaved as a propeptide — removed in mature form; it reads GAPCQSSPQLWGPMAIFLLALQR.

Interacts heterophilically through its MAM domain with proteins in axon-rich regions and through its Ig-like domains with proteins in differentiating muscle. Interacts (through the Ig-like domains) with NLGN2. In terms of tissue distribution, has been found in brain, heart, skeletal muscle and kidney. Found to be overexpressed in tumor tissues.

It is found in the cell membrane. Its function is as follows. Required for radial migration of cortical neurons in the superficial layer of the neocortex. Plays a role in the formation or maintenance of inhibitory synapses. May function by inhibiting the activity of NLGN2. In Homo sapiens (Human), this protein is MAM domain-containing glycosylphosphatidylinositol anchor protein 1 (MDGA1).